The sequence spans 390 residues: GTPase Obg (390 aa).

Residues 1–159 enclose the Obg domain; the sequence is MKFVDEAVIR…RHLRLELLLL (159 aa). The segment at 22-42 is disordered; the sequence is SFRTEKYVPRGGPDGGDGGDG. The span at 33–42 shows a compositional bias: gly residues; the sequence is GPDGGDGGDG. One can recognise an OBG-type G domain in the interval 160–333; it reads ADVGMLGLPN…LTYNLMTTIE (174 aa). Residues 166–173, 191–195, 213–216, 283–286, and 314–316 each bind GTP; these read GLPNAGKS, FTTLI, DIPG, NKVD, and SAL. Residues Ser-173 and Thr-193 each coordinate Mg(2+).

The protein belongs to the TRAFAC class OBG-HflX-like GTPase superfamily. OBG GTPase family. Monomer. The cofactor is Mg(2+).

It localises to the cytoplasm. In terms of biological role, an essential GTPase which binds GTP, GDP and possibly (p)ppGpp with moderate affinity, with high nucleotide exchange rates and a fairly low GTP hydrolysis rate. Plays a role in control of the cell cycle, stress response, ribosome biogenesis and in those bacteria that undergo differentiation, in morphogenesis control. The chain is GTPase Obg from Photobacterium profundum (strain SS9).